Consider the following 373-residue polypeptide: Queuine tRNA-ribosyltransferase (373 aa).

D93 functions as the Proton acceptor in the catalytic mechanism. Substrate-binding positions include D93–F97, D147, Q189, and G216. The RNA binding stretch occupies residues G247–D253. D266 functions as the Nucleophile in the catalytic mechanism. The interval T271–R275 is RNA binding; important for wobble base 34 recognition. C304, C306, C309, and H335 together coordinate Zn(2+).

This sequence belongs to the queuine tRNA-ribosyltransferase family. In terms of assembly, homodimer. Within each dimer, one monomer is responsible for RNA recognition and catalysis, while the other monomer binds to the replacement base PreQ1. Requires Zn(2+) as cofactor.

It catalyses the reaction 7-aminomethyl-7-carbaguanine + guanosine(34) in tRNA = 7-aminomethyl-7-carbaguanosine(34) in tRNA + guanine. It participates in tRNA modification; tRNA-queuosine biosynthesis. Its function is as follows. Catalyzes the base-exchange of a guanine (G) residue with the queuine precursor 7-aminomethyl-7-deazaguanine (PreQ1) at position 34 (anticodon wobble position) in tRNAs with GU(N) anticodons (tRNA-Asp, -Asn, -His and -Tyr). Catalysis occurs through a double-displacement mechanism. The nucleophile active site attacks the C1' of nucleotide 34 to detach the guanine base from the RNA, forming a covalent enzyme-RNA intermediate. The proton acceptor active site deprotonates the incoming PreQ1, allowing a nucleophilic attack on the C1' of the ribose to form the product. After dissociation, two additional enzymatic reactions on the tRNA convert PreQ1 to queuine (Q), resulting in the hypermodified nucleoside queuosine (7-(((4,5-cis-dihydroxy-2-cyclopenten-1-yl)amino)methyl)-7-deazaguanosine). This Halothermothrix orenii (strain H 168 / OCM 544 / DSM 9562) protein is Queuine tRNA-ribosyltransferase.